A 352-amino-acid polypeptide reads, in one-letter code: MASSINGRKPSEIFKAQALLYKHIYAFIDSMSLKWAVGMNIPNIIHNHGKPISLSNLVSILQVPSSKIGNVRRLMRYLAHNGFFEIITKEEESYALTVASELLVRGSDLCLAPMVECVLDPTLSGSYHELKKWIYEEDLTLFGVTLGSGFWDFLDKNPEYNTSFNDAMASDSKLINLALRDCDFVFDGLESIVDVGGGTGTTAKIICETFPKLKCIVFDRPQVVENLSGSNNLTYVGGDMFTSIPNADAVLLKYILHNWTDKDCLRILKKCKEAVTNDGKRGKVTIIDMVINEKKDENQVTQIKLLMDVNMACLNGKERNEEEWKKLFIEAGFQHYKISPLTGFLSLIEIYP.

A substrate-binding site is contributed by 118–127 (VLDPTLSGSY). S-adenosyl-L-methionine is bound by residues Gly-196, Asp-219, Asp-239, Met-240, and Lys-253. The active-site Proton acceptor is His-257.

It belongs to the class I-like SAM-binding methyltransferase superfamily. Cation-independent O-methyltransferase family. COMT subfamily. In terms of assembly, homodimer.

It catalyses the reaction a 7-hydroxyisoflavone + S-adenosyl-L-methionine = a 7-methoxyisoflavone + S-adenosyl-L-homocysteine + H(+). It functions in the pathway phytoalexin biosynthesis; medicarpin biosynthesis. In terms of biological role, transfers a methyl group to 7-hydroxyls of the isoflavones daidzein, genistein and 6,7,4'-trihydroxyisoflavone. Can also methylate (+)6a-hydroxymaackiain with lower efficiency. This is Isoflavone-7-O-methyltransferase 9 from Medicago sativa (Alfalfa).